The primary structure comprises 581 residues: Cytosolic Fe-S cluster assembly factor nar-1 (581 aa).

The [4Fe-4S] cluster site is built by Cys20, Cys68, Cys71, Cys74, Cys215, Cys270, Cys457, and Cys461.

Belongs to the NARF family.

Functionally, component of the cytosolic Fe/S protein assembly machinery. Required for maturation of extramitochondrial Fe/S proteins. May play a role in the transfer of pre-assembled Fe/S clusters to target apoproteins. The polypeptide is Cytosolic Fe-S cluster assembly factor nar-1 (nar-1) (Neurospora crassa (strain ATCC 24698 / 74-OR23-1A / CBS 708.71 / DSM 1257 / FGSC 987)).